We begin with the raw amino-acid sequence, 127 residues long: Large ribosomal subunit protein uL24 (127 aa).

It belongs to the universal ribosomal protein uL24 family. In terms of assembly, component of the large ribosomal subunit. Mature ribosomes consist of a small (40S) and a large (60S) subunit. The 40S subunit contains about 32 different proteins and 1 molecule of RNA (18S). The 60S subunit contains 45 different proteins and 3 molecules of RNA (25S, 5.8S and 5S).

Its subcellular location is the cytoplasm. Functionally, component of the ribosome, a large ribonucleoprotein complex responsible for the synthesis of proteins in the cell. The small ribosomal subunit (SSU) binds messenger RNAs (mRNAs) and translates the encoded message by selecting cognate aminoacyl-transfer RNA (tRNA) molecules. The large subunit (LSU) contains the ribosomal catalytic site termed the peptidyl transferase center (PTC), which catalyzes the formation of peptide bonds, thereby polymerizing the amino acids delivered by tRNAs into a polypeptide chain. The nascent polypeptides leave the ribosome through a tunnel in the LSU and interact with protein factors that function in enzymatic processing, targeting, and the membrane insertion of nascent chains at the exit of the ribosomal tunnel. This chain is Large ribosomal subunit protein uL24, found in Candida albicans (strain SC5314 / ATCC MYA-2876) (Yeast).